Consider the following 424-residue polypeptide: Glutamyl-tRNA reductase (424 aa).

Residues 49–52, Ser105, 110–112, and Gln116 contribute to the substrate site; these read TCNR and EPQ. The active-site Nucleophile is the Cys50. Residue 185-190 participates in NADP(+) binding; the sequence is GSGETA.

This sequence belongs to the glutamyl-tRNA reductase family. Homodimer.

The catalysed reaction is (S)-4-amino-5-oxopentanoate + tRNA(Glu) + NADP(+) = L-glutamyl-tRNA(Glu) + NADPH + H(+). The protein operates within porphyrin-containing compound metabolism; protoporphyrin-IX biosynthesis; 5-aminolevulinate from L-glutamyl-tRNA(Glu): step 1/2. Catalyzes the NADPH-dependent reduction of glutamyl-tRNA(Glu) to glutamate 1-semialdehyde (GSA). This is Glutamyl-tRNA reductase from Legionella pneumophila (strain Lens).